The primary structure comprises 555 residues: Phosphomethylpyrimidine synthase (555 aa).

Residues asparagine 191, methionine 220, tyrosine 249, histidine 285, 305–307, 346–349, and glutamate 385 contribute to the substrate site; these read SRG and DGLR. Histidine 389 is a binding site for Zn(2+). Tyrosine 412 lines the substrate pocket. Histidine 453 serves as a coordination point for Zn(2+). Cysteine 533, cysteine 536, and cysteine 541 together coordinate [4Fe-4S] cluster.

Belongs to the ThiC family. Homodimer. It depends on [4Fe-4S] cluster as a cofactor.

It catalyses the reaction 5-amino-1-(5-phospho-beta-D-ribosyl)imidazole + S-adenosyl-L-methionine = 4-amino-2-methyl-5-(phosphooxymethyl)pyrimidine + CO + 5'-deoxyadenosine + formate + L-methionine + 3 H(+). It participates in cofactor biosynthesis; thiamine diphosphate biosynthesis. Its function is as follows. Catalyzes the synthesis of the hydroxymethylpyrimidine phosphate (HMP-P) moiety of thiamine from aminoimidazole ribotide (AIR) in a radical S-adenosyl-L-methionine (SAM)-dependent reaction. In Ehrlichia ruminantium (strain Welgevonden), this protein is Phosphomethylpyrimidine synthase.